Here is a 417-residue protein sequence, read N- to C-terminus: Serine hydroxymethyltransferase (417 aa).

Residues L121 and 125-127 (GHL) each bind (6S)-5,6,7,8-tetrahydrofolate. An N6-(pyridoxal phosphate)lysine modification is found at K229. (6S)-5,6,7,8-tetrahydrofolate is bound at residue 355–357 (SPF).

Belongs to the SHMT family. In terms of assembly, homodimer. Requires pyridoxal 5'-phosphate as cofactor.

The protein localises to the cytoplasm. It carries out the reaction (6R)-5,10-methylene-5,6,7,8-tetrahydrofolate + glycine + H2O = (6S)-5,6,7,8-tetrahydrofolate + L-serine. It participates in one-carbon metabolism; tetrahydrofolate interconversion. The protein operates within amino-acid biosynthesis; glycine biosynthesis; glycine from L-serine: step 1/1. In terms of biological role, catalyzes the reversible interconversion of serine and glycine with tetrahydrofolate (THF) serving as the one-carbon carrier. This reaction serves as the major source of one-carbon groups required for the biosynthesis of purines, thymidylate, methionine, and other important biomolecules. Also exhibits THF-independent aldolase activity toward beta-hydroxyamino acids, producing glycine and aldehydes, via a retro-aldol mechanism. This chain is Serine hydroxymethyltransferase, found in Salmonella paratyphi C (strain RKS4594).